A 407-amino-acid chain; its full sequence is Accessory Sec system protein translocase subunit SecY2 (407 aa).

A run of 10 helical transmembrane segments spans residues 22-42 (IAFT…TIVD), 68-88 (LNVF…ISLI), 108-128 (EKFL…NQFV), 136-156 (FTEL…MWLA), 169-189 (PIVL…IVSI), 191-211 (ILML…LLLT), 245-265 (ISIM…NLIF), 280-300 (FGHY…GYLL), 343-363 (WFGT…SLLV), and 366-386 (LSEY…AMNI).

It belongs to the SecY/SEC61-alpha family. SecY2 subfamily. Component of the accessory SecA2/SecY2 protein translocase complex required to export cell wall proteins. May form heterotrimers with SecE and SecG subunits.

The protein resides in the cell membrane. Functionally, part of the accessory SecA2/SecY2 system specifically required for export of possible cell wall proteins. The central subunit of a protein translocation channel. The protein is Accessory Sec system protein translocase subunit SecY2 of Staphylococcus pseudintermedius (strain ED99).